Consider the following 340-residue polypeptide: Glycerol-3-phosphate dehydrogenase [NAD(P)+] (340 aa).

NADPH is bound by residues Ser14, Phe15, Arg35, and Lys109. Residues Lys109 and Gly137 each coordinate sn-glycerol 3-phosphate. Residue Ala141 participates in NADPH binding. Positions 192, 245, 255, 256, and 257 each coordinate sn-glycerol 3-phosphate. Catalysis depends on Lys192, which acts as the Proton acceptor. Position 256 (Arg256) interacts with NADPH. NADPH contacts are provided by Val280 and Glu282.

It belongs to the NAD-dependent glycerol-3-phosphate dehydrogenase family.

It is found in the cytoplasm. The enzyme catalyses sn-glycerol 3-phosphate + NAD(+) = dihydroxyacetone phosphate + NADH + H(+). It carries out the reaction sn-glycerol 3-phosphate + NADP(+) = dihydroxyacetone phosphate + NADPH + H(+). The protein operates within membrane lipid metabolism; glycerophospholipid metabolism. Catalyzes the reduction of the glycolytic intermediate dihydroxyacetone phosphate (DHAP) to sn-glycerol 3-phosphate (G3P), the key precursor for phospholipid synthesis. The chain is Glycerol-3-phosphate dehydrogenase [NAD(P)+] from Teredinibacter turnerae (strain ATCC 39867 / T7901).